Consider the following 44-residue polypeptide: Viresin (44 aa).

This sequence belongs to the insect A10/OS-D protein family.

The protein resides in the secreted. Its function is as follows. Has antibacterial activity against the Gram-negative bacteria E.coli and E.cloacae, but not against the Gram-negative bacteria P.aeruginosa, P.vulgaris, K.pneumoniae and S.enteritidis or the Gram-positive bacteria S.aureus, S.epidermidis and S.salivarius. The protein is Viresin of Heliothis virescens (Tobacco budworm moth).